We begin with the raw amino-acid sequence, 862 residues long: MASEVPYASGMPIKKIGHRSVDSSGGTTSSALKGAIQLGITHTVGSLSTKPESDVLMQDFHMVESIFFPSEGSNLTPAHHYNAFRFKTYAPVAFRYFWELFGIRPDDYLYSLCSEPLIELCSSGASGSLFYVSSDDEFIVKTVRHKEAEFLQKLLPGYYINLNQNPRTLLPKFYGLYCVQTGGKNIRIVVMNNLLPRSVKMHIKYDLKGSTYRRRASQKEREKPLPTFKDLDFLQDIPDGLFLDADVHNALCKTLQRDCLVLQSFKIMDYSLLMSIHNIDHAQREPLSSETQYSVDTRRPAPQKALYSTAMESIQGEARRGGTMETDDHMGGIPARNSKGERLLLYIGIIDILQSYRFVKKLEHSWKALIHDGDTVSVHRPGFYAEWFQRFMCNTVFKKIPLKPSPSKKLRSGSSFSQRAGSSGNSCITYQPLVSGEHKAQVTTKAEVEPGVHLGCPDVLPQTPPLEEISEGSPTPDPSFSPLVEETLQMLTTSVDNSEYMGNGDFLPTRLQAQQDAVNTVCHSKTRSNPENNVGLITLDNDCEVLTTLTPDTGRILSKLHTVQPKGKITFCMGIHVAHLALKHRQGNNHKIRIIAFVGNPVEDNEKNLVKLAKCLKKEKVNVDIINFGEEEVNTEKLTAFVNTLNGKDGTGSHLVTVPPGPSLADALISFPILAGEGGAMMGLGASDFEFGVDPSADPELALVLRVFMEEQRQRQEEEARQAAAASAAEAGIATTGTEDSDDALLKMTISQQEFGHTGLPDLSSMTEEEKIVCAMQMSLQGAEFGLAESADIDASSAMDTSEPAKEEDDYDVMQDPEFLQSVLENLPGVDPNNEAIRNAVGSLASQATKDSKKDKKEEDKK.

The PIPK domain maps to 28-396 (TSSALKGAIQ…WFQRFMCNTV (369 aa)). Disordered regions lie at residues 404–424 (PSPSKKLRSGSSFSQRAGSSG) and 453–481 (HLGCPDVLPQTPPLEEISEGSPTPDPSFS). Over residues 412 to 424 (SGSSFSQRAGSSG) the composition is skewed to low complexity. A VWFA domain is found at 490–673 (MLTTSVDNSE…LADALISFPI (184 aa)). One can recognise a UIM 1 domain in the interval 696–715 (SADPELALVLRVFMEEQRQR). A disordered region spans residues 716 to 740 (QEEEARQAAAASAAEAGIATTGTED). Residues 722-731 (QAAAASAAEA) show a composition bias toward low complexity. Residues 766–783 (MTEEEKIVCAMQMSLQGA) enclose the UIM 2 domain. The segment at 826–862 (NLPGVDPNNEAIRNAVGSLASQATKDSKKDKKEEDKK) is disordered. The span at 850 to 862 (KDSKKDKKEEDKK) shows a compositional bias: basic and acidic residues.

In terms of tissue distribution, testis-specific.

It localises to the cytoplasm. Functionally, has negligible PIP5 kinase activity. Binds to ubiquitinated proteins. In Homo sapiens (Human), this protein is Putative PIP5K1A and PSMD4-like protein (PIPSL).